The following is a 175-amino-acid chain: Methylmalonyl-CoA epimerase, mitochondrial (175 aa).

The N-terminal 35 residues, Met-1–His-35, are a transit peptide targeting the mitochondrion. Residues Arg-46–Ala-175 enclose the VOC domain. His-49 is a Co(2+) binding site. N6-succinyllysine is present on Lys-113. His-121 is a Co(2+) binding site. Position 149 is an N6-acetyllysine; alternate (Lys-149). Residue Lys-149 is modified to N6-succinyllysine; alternate. Glu-171 is a Co(2+) binding site.

The protein belongs to the methylmalonyl-CoA epimerase family.

The protein localises to the mitochondrion. The catalysed reaction is (R)-methylmalonyl-CoA = (S)-methylmalonyl-CoA. In terms of biological role, methylmalonyl-CoA epimerase involved in propionyl-CoA metabolism. This is Methylmalonyl-CoA epimerase, mitochondrial (MCEE) from Bos taurus (Bovine).